The primary structure comprises 436 residues: Bifunctional protein GlmU (436 aa).

Residues 1-225 (MNNNTSIIIL…EQNFMGINDK (225 aa)) form a pyrophosphorylase region. Residues 10–13 (LAAG), lysine 24, glutamine 76, and 83–84 (GT) each bind UDP-N-acetyl-alpha-D-glucosamine. Aspartate 104 lines the Mg(2+) pocket. Residues glycine 137, glutamate 151, asparagine 166, and asparagine 223 each contribute to the UDP-N-acetyl-alpha-D-glucosamine site. Asparagine 223 is a Mg(2+) binding site. The linker stretch occupies residues 226–246 (FQLSIAEKIMQDEIKQNLMKA). Positions 247-436 (GVLMRMPESI…KFFGKDDVKK (190 aa)) are N-acetyltransferase. Arginine 310 and lysine 327 together coordinate UDP-N-acetyl-alpha-D-glucosamine. The active-site Proton acceptor is the histidine 338. Tyrosine 341 and asparagine 352 together coordinate UDP-N-acetyl-alpha-D-glucosamine. Acetyl-CoA contacts are provided by residues 361 to 362 (NY), serine 380, alanine 398, and arginine 415.

The protein in the N-terminal section; belongs to the N-acetylglucosamine-1-phosphate uridyltransferase family. It in the C-terminal section; belongs to the transferase hexapeptide repeat family. Homotrimer. Mg(2+) serves as cofactor.

The protein resides in the cytoplasm. The enzyme catalyses alpha-D-glucosamine 1-phosphate + acetyl-CoA = N-acetyl-alpha-D-glucosamine 1-phosphate + CoA + H(+). It carries out the reaction N-acetyl-alpha-D-glucosamine 1-phosphate + UTP + H(+) = UDP-N-acetyl-alpha-D-glucosamine + diphosphate. It participates in nucleotide-sugar biosynthesis; UDP-N-acetyl-alpha-D-glucosamine biosynthesis; N-acetyl-alpha-D-glucosamine 1-phosphate from alpha-D-glucosamine 6-phosphate (route II): step 2/2. It functions in the pathway nucleotide-sugar biosynthesis; UDP-N-acetyl-alpha-D-glucosamine biosynthesis; UDP-N-acetyl-alpha-D-glucosamine from N-acetyl-alpha-D-glucosamine 1-phosphate: step 1/1. The protein operates within bacterial outer membrane biogenesis; LPS lipid A biosynthesis. Catalyzes the last two sequential reactions in the de novo biosynthetic pathway for UDP-N-acetylglucosamine (UDP-GlcNAc). The C-terminal domain catalyzes the transfer of acetyl group from acetyl coenzyme A to glucosamine-1-phosphate (GlcN-1-P) to produce N-acetylglucosamine-1-phosphate (GlcNAc-1-P), which is converted into UDP-GlcNAc by the transfer of uridine 5-monophosphate (from uridine 5-triphosphate), a reaction catalyzed by the N-terminal domain. This Campylobacter concisus (strain 13826) protein is Bifunctional protein GlmU.